The following is a 119-amino-acid chain: Ribonuclease P protein component (119 aa).

This sequence belongs to the RnpA family. As to quaternary structure, consists of a catalytic RNA component (M1 or rnpB) and a protein subunit.

The enzyme catalyses Endonucleolytic cleavage of RNA, removing 5'-extranucleotides from tRNA precursor.. Functionally, RNaseP catalyzes the removal of the 5'-leader sequence from pre-tRNA to produce the mature 5'-terminus. It can also cleave other RNA substrates such as 4.5S RNA. The protein component plays an auxiliary but essential role in vivo by binding to the 5'-leader sequence and broadening the substrate specificity of the ribozyme. The sequence is that of Ribonuclease P protein component from Clostridium acetobutylicum (strain ATCC 824 / DSM 792 / JCM 1419 / IAM 19013 / LMG 5710 / NBRC 13948 / NRRL B-527 / VKM B-1787 / 2291 / W).